Here is a 200-residue protein sequence, read N- to C-terminus: Large ribosomal subunit protein uL4 (200 aa).

The disordered stretch occupies residues G38–R68. A compositionally biased stretch (basic residues) spans G54 to G65.

The protein belongs to the universal ribosomal protein uL4 family. As to quaternary structure, part of the 50S ribosomal subunit.

In terms of biological role, one of the primary rRNA binding proteins, this protein initially binds near the 5'-end of the 23S rRNA. It is important during the early stages of 50S assembly. It makes multiple contacts with different domains of the 23S rRNA in the assembled 50S subunit and ribosome. Its function is as follows. Forms part of the polypeptide exit tunnel. This chain is Large ribosomal subunit protein uL4, found in Pseudomonas fluorescens (strain SBW25).